Here is a 588-residue protein sequence, read N- to C-terminus: Hyaluronan synthase 1 (588 aa).

Topologically, residues 1–28 (MKEKAAETMEIPEGIPKDLEPKHPTLWR) are cytoplasmic. Residues 29–49 (IIYYSFGVVLLATITAAYVAE) form a helical membrane-spanning segment. At 50-61 (FQVLKHEAILFS) the chain is on the extracellular side. The chain crosses the membrane as a helical span at residues 62–82 (LGLYGLAMLLHLMMQSLFAFL). The Cytoplasmic portion of the chain corresponds to 83–411 (EIRRVNKSEL…IWMTYESVVS (329 aa)). A helical transmembrane segment spans residues 412–432 (FIFPFFITATVIRLIYAGTIW). Residue N433 is a topological domain, extracellular. Residues 434–454 (VVWLLLCIQIMSLFKSIYACW) form a helical membrane-spanning segment. Over 455-456 (LR) the chain is Cytoplasmic. Residues 457–477 (GNFIMLLMSLYSMLYMTGLLP) traverse the membrane as a helical segment. At 478 to 505 (SKYFALLTLNKTGWGTSGRKKIVGNYMP) the chain is on the extracellular side. A helical transmembrane segment spans residues 506-526 (ILPLSIWAAVLCGGVGYSIYM). Residues 527–543 (DCQNDWSTPEKQKEMYH) lie on the Cytoplasmic side of the membrane. Residues 544 to 564 (LLYGCVGYVMYWVIMAVMYWV) traverse the membrane as a helical segment. The Extracellular portion of the chain corresponds to 565 to 588 (WVKRCCRKRSQTVTLVHDIPDMCV).

This sequence belongs to the NodC/HAS family. Requires Mg(2+) as cofactor. Expression moves as a gradient through the embryo. The mRNA is first expressed in the animal region of the blastula, and by early gastrula is found everywhere except in the outer layer of the dorsal blastopore lip. By mid-gastrula, protein is present in the inner ectodermal layer and the endoderm, then disappears from dorsal ectoderm as the neural plate is induced and later decays in a dorsoventral direction. Last expressed in ventral regions of the gut at the tailbud stage (at protein level).

The protein resides in the membrane. The enzyme catalyses [hyaluronan](n) + UDP-N-acetyl-alpha-D-glucosamine = N-acetyl-beta-D-glucosaminyl-(1-&gt;4)-[hyaluronan](n) + UDP + H(+). The catalysed reaction is N-acetyl-beta-D-glucosaminyl-(1-&gt;4)-[hyaluronan](n) + UDP-alpha-D-glucuronate = [hyaluronan](n+1) + UDP + H(+). It participates in glycan biosynthesis; hyaluronan biosynthesis. In terms of biological role, catalyzes the addition of GlcNAc or GlcUA monosaccharides to the nascent hyaluronan polymer. Therefore, it is essential to hyaluronan synthesis a major component of most extracellular matrices that has a structural role in tissues architectures and regulates cell adhesion, migration and differentiation. Also able to catalyze the synthesis of chito-oligosaccharide depending on the substrate. The sequence is that of Hyaluronan synthase 1 (has1) from Xenopus laevis (African clawed frog).